Reading from the N-terminus, the 204-residue chain is Ciliary microtubule inner protein 7 (204 aa).

It is found in the cell projection. It localises to the cilium. The polypeptide is Ciliary microtubule inner protein 7 (Homo sapiens (Human)).